We begin with the raw amino-acid sequence, 827 residues long: Leucine--tRNA ligase (827 aa).

The 'HIGH' region signature appears at 46-56 (PYPSGRIHMGH). The short motif at 585-589 (KMSKS) is the 'KMSKS' region element. Lys588 is an ATP binding site.

The protein belongs to the class-I aminoacyl-tRNA synthetase family.

The protein resides in the cytoplasm. The enzyme catalyses tRNA(Leu) + L-leucine + ATP = L-leucyl-tRNA(Leu) + AMP + diphosphate. The chain is Leucine--tRNA ligase from Desulfotalea psychrophila (strain LSv54 / DSM 12343).